The sequence spans 497 residues: MQERRVDVVLVGGGIMSATLGVLLKELEPSWSMMLLERLEGVALESTGAWNNAGTGHQALCELNYTPMRSNGEIDIQKAIKINESFEISKQFWAYHVQKKHLKEPESFIHPVPHMSFVRGKDVAYLQARHKALSLHPLFCGMKYSESMDEIERWVPLIAEGRKREERVAATCIDWGTDVNFGSLTEQFSDYLAKQEGFVLKTHHEVVDIKRSQEGHWRVKSLDKKSGEFTEVEARFVFIGAGGAALPLLYKSGIPEARGYGGFPVSGQWLVCSNPEPIEIHRAKVYGKAAVGAPPMSVPHLDTRVIDGEKKLLFGPFAGFSTNFLKQGSYLDFFLSFNSGNFKTMIEAGLDNIPLTQYLINQVMLSLKGRIEVLKEYMPKAEFGDWELKIAGQRVQIIKPDAKNRGSLQFGTEVVASNDGSLAALLGASPGASTAVEAMLGVLEKCFKKELETPLWKEKLQEMIPSYGHPLSDDLGRLNENRRYTSGLLHLPFTPVQ.

Belongs to the MQO family. The cofactor is FAD.

It catalyses the reaction (S)-malate + a quinone = a quinol + oxaloacetate. Its pathway is carbohydrate metabolism; tricarboxylic acid cycle; oxaloacetate from (S)-malate (quinone route): step 1/1. In Wolinella succinogenes (strain ATCC 29543 / DSM 1740 / CCUG 13145 / JCM 31913 / LMG 7466 / NCTC 11488 / FDC 602W) (Vibrio succinogenes), this protein is Probable malate:quinone oxidoreductase.